The chain runs to 255 residues: Glutamate racemase (255 aa).

Substrate-binding positions include 7–8 (DS) and 39–40 (YG). Residue C70 is the Proton donor/acceptor of the active site. 71–72 (NT) serves as a coordination point for substrate. C181 functions as the Proton donor/acceptor in the catalytic mechanism. 182 to 183 (TH) serves as a coordination point for substrate.

This sequence belongs to the aspartate/glutamate racemases family. Homodimer.

It carries out the reaction L-glutamate = D-glutamate. It participates in cell wall biogenesis; peptidoglycan biosynthesis. In terms of biological role, provides the (R)-glutamate required for cell wall biosynthesis. The chain is Glutamate racemase from Helicobacter pylori (strain J99 / ATCC 700824) (Campylobacter pylori J99).